The chain runs to 152 residues: Xanthine-guanine phosphoribosyltransferase (152 aa).

5-phospho-alpha-D-ribose 1-diphosphate-binding positions include 37-38 (RG), Arg69, and 88-96 (DDLVDTGGT). Position 69 (Arg69) interacts with GMP. Residue Asp89 participates in Mg(2+) binding. Guanine contacts are provided by Asp92 and Ile135. Residues Asp92 and Ile135 each contribute to the xanthine site. GMP is bound by residues 92–96 (DTGGT) and 134–135 (WI).

Belongs to the purine/pyrimidine phosphoribosyltransferase family. XGPT subfamily. As to quaternary structure, homotetramer. Mg(2+) is required as a cofactor.

The protein resides in the cell inner membrane. The catalysed reaction is GMP + diphosphate = guanine + 5-phospho-alpha-D-ribose 1-diphosphate. It catalyses the reaction XMP + diphosphate = xanthine + 5-phospho-alpha-D-ribose 1-diphosphate. The enzyme catalyses IMP + diphosphate = hypoxanthine + 5-phospho-alpha-D-ribose 1-diphosphate. It participates in purine metabolism; GMP biosynthesis via salvage pathway; GMP from guanine: step 1/1. It functions in the pathway purine metabolism; XMP biosynthesis via salvage pathway; XMP from xanthine: step 1/1. Purine salvage pathway enzyme that catalyzes the transfer of the ribosyl-5-phosphate group from 5-phospho-alpha-D-ribose 1-diphosphate (PRPP) to the N9 position of the 6-oxopurines guanine and xanthine to form the corresponding ribonucleotides GMP (guanosine 5'-monophosphate) and XMP (xanthosine 5'-monophosphate), with the release of PPi. To a lesser extent, also acts on hypoxanthine. The sequence is that of Xanthine-guanine phosphoribosyltransferase from Escherichia coli (strain UTI89 / UPEC).